A 585-amino-acid polypeptide reads, in one-letter code: SCF E3 ubiquitin ligase complex F-box protein grrA (585 aa).

Residues 1–10 (MARSRQPTRF) show a composition bias toward polar residues. 2 disordered regions span residues 1-34 (MARSRQPTRFSSEAPSESSSSTSPERAADDDTDF) and 41-60 (DSQSSIGAGNPRDSHIQNDP). Low complexity predominate over residues 11 to 25 (SSEAPSESSSSTSPE). Residues 65-113 (PPIAYLPPEILISIFSKLSSPRDLLSCLLVCRIWALNCVGLLWHRPSCN) form the F-box domain. LRR repeat units lie at residues 147-171 (TEDVSDGTVVPFSQCNRIERLTLTN), 172-197 (CRKLTDIGVSDLVVGSRHLQALDVSE), 198-223 (LRSLTDHTLFKVAENCNRLQGLNITG), 224-249 (CVKVTDDSLIAVSQNCRLLKRLKLNG), 250-275 (VSQVTDKAILSFAQNCPSILEIDLQE), 276-301 (CKLVTNQSVTALMTTLQNLRELRLAH), 302-329 (CTEIDDSAFLDLPRHIQMTSLRILDLTA), 330-355 (CENIRDEAVERIVSSAPRLRNLVLAK), 356-381 (CKFITDRAVWAICKLGKNLHYVHLGH), 382-407 (CSNINDSAVIQLVKSCNRIRYIDLAC), 408-432 (CSRLTDRSVQQLATLPKLRRIGLVK), 433-465 (CQLITDASILALARPAQDHSVPCSSLERVHLSY), and 466-491 (CVNLTMVGIHALLNSCPRLTHLSLTG).

In terms of assembly, part of a SCF E3 ubiquitin ligase complex. As to expression, specifically expressed in ascus mother cells.

Its subcellular location is the cytoplasm. Its function is as follows. Involved in meiosis and required for ascospore formation. Involved in substrate recognition in ubiquitin-dependent degradation. The protein is SCF E3 ubiquitin ligase complex F-box protein grrA (grrA) of Emericella nidulans (strain FGSC A4 / ATCC 38163 / CBS 112.46 / NRRL 194 / M139) (Aspergillus nidulans).